Reading from the N-terminus, the 234-residue chain is Large ribosomal subunit protein uL1 (234 aa).

The protein belongs to the universal ribosomal protein uL1 family. Part of the 50S ribosomal subunit.

In terms of biological role, binds directly to 23S rRNA. The L1 stalk is quite mobile in the ribosome, and is involved in E site tRNA release. Its function is as follows. Protein L1 is also a translational repressor protein, it controls the translation of the L11 operon by binding to its mRNA. This chain is Large ribosomal subunit protein uL1, found in Edwardsiella ictaluri (strain 93-146).